Reading from the N-terminus, the 151-residue chain is Small ribosomal subunit protein bS6 (151 aa).

Residues 94-151 form a disordered region; sequence EEHEQGPSAMMRKRDDDDRGERGERPRGPRPERGERGERGERGPRRPREDNIGEEGLY. Over residues 105–144 the composition is skewed to basic and acidic residues; the sequence is RKRDDDDRGERGERPRGPRPERGERGERGERGPRRPREDN.

This sequence belongs to the bacterial ribosomal protein bS6 family.

In terms of biological role, binds together with bS18 to 16S ribosomal RNA. The sequence is that of Small ribosomal subunit protein bS6 from Beijerinckia indica subsp. indica (strain ATCC 9039 / DSM 1715 / NCIMB 8712).